A 561-amino-acid chain; its full sequence is Rho guanine nucleotide exchange factor 9 (561 aa).

An SH3 domain is found at 53 to 112 (DSIVSAEAVWDHVTMANRELAFKAGDVIKVLDASNKDWWWGQIDDEEGWFPASFVRLWVN). Positions 145-155 (RDQMRANVINE) are interaction with GPHN. One can recognise a DH domain in the interval 148–332 (MRANVINEIM…RNVTQQINER (185 aa)). The PH domain maps to 363-470 (ELIYTGEMAW…WLRAFREERK (108 aa)). The tract at residues 499-524 (KQKGVNSARSVPPSYPPPQDPLNQGQ) is disordered. Ser547 carries the post-translational modification Phosphoserine.

As to quaternary structure, interacts with GPHN.

The protein resides in the cytoplasm. The protein localises to the postsynaptic density. Functionally, acts as a guanine nucleotide exchange factor (GEF) for CDC42. Promotes formation of GPHN clusters. This Bos taurus (Bovine) protein is Rho guanine nucleotide exchange factor 9 (ARHGEF9).